Reading from the N-terminus, the 128-residue chain is Probable 4-amino-4-deoxy-L-arabinose-phosphoundecaprenol flippase subunit ArnF (128 aa).

The Cytoplasmic segment spans residues 1 to 2 (MG). The chain crosses the membrane as a helical span at residues 3–23 (LMWGLFSVIIASAAQLSLGFA). Residues 24–35 (ASHLPPMTHLWD) lie on the Periplasmic side of the membrane. Residues 36–56 (FIAALLAFGLDARILLLGLLG) form a helical membrane-spanning segment. The Cytoplasmic portion of the chain corresponds to 57–76 (YLLSVFCWYKTLHKLALSKA). A helical transmembrane segment spans residues 77–97 (YALLSMSYVLVWIASMVLPGW). Topologically, residues 98-100 (EGT) are periplasmic. A helical transmembrane segment spans residues 101–121 (FSLKALLGVACIMSGLMLIFL). Topologically, residues 122–128 (PTTKQRY) are cytoplasmic.

This sequence belongs to the ArnF family. As to quaternary structure, heterodimer of ArnE and ArnF.

It localises to the cell inner membrane. It participates in bacterial outer membrane biogenesis; lipopolysaccharide biosynthesis. In terms of biological role, translocates 4-amino-4-deoxy-L-arabinose-phosphoundecaprenol (alpha-L-Ara4N-phosphoundecaprenol) from the cytoplasmic to the periplasmic side of the inner membrane. The sequence is that of Probable 4-amino-4-deoxy-L-arabinose-phosphoundecaprenol flippase subunit ArnF from Escherichia coli O127:H6 (strain E2348/69 / EPEC).